Here is a 553-residue protein sequence, read N- to C-terminus: Glycerol kinase 2 (553 aa).

Residue threonine 20 coordinates substrate. Residue arginine 24 participates in ATP binding. Arginine 94, tyrosine 148, and aspartate 259 together coordinate substrate. Residues threonine 281, glycine 326, and 427-431 each bind ATP; that span reads GMTNN. A helical transmembrane segment spans residues 526–546; the sequence is IFSSLPLGFFIVSSMVMLIGA.

It belongs to the FGGY kinase family. Interacts with ARMC12. Interacts with PLD6. As to expression, testis-specific. Expressed in the midpiece of spermatozoa.

Its subcellular location is the mitochondrion outer membrane. The protein localises to the cytoplasm. It carries out the reaction glycerol + ATP = sn-glycerol 3-phosphate + ADP + H(+). Its pathway is polyol metabolism; glycerol degradation via glycerol kinase pathway; sn-glycerol 3-phosphate from glycerol: step 1/1. Its function is as follows. Key enzyme in the regulation of glycerol uptake and metabolism. Essential for male fertility and sperm mitochondrial sheath formation. Required for proper arrangement of crescent-like mitochondria to form the mitochondrial sheath during spermatogenesis. Can induce mitochondrial clustering through interactions with PLD6 and up-regulation of phosphatidic acid synthesis in the mitochondria. The sequence is that of Glycerol kinase 2 (GK2) from Homo sapiens (Human).